A 128-amino-acid chain; its full sequence is KRAB domain-containing protein 1 (128 aa).

The KRAB domain occupies 15–86 (VAFEDVAVYF…QPQGVLSRND (72 aa)).

This is KRAB domain-containing protein 1 (KRBOX1) from Homo sapiens (Human).